The following is an 885-amino-acid chain: DDT domain-containing protein DDB_G0282237 (885 aa).

In terms of domain architecture, WAC spans 20–125 (EEYFVIKFTK…GEIVSFKKAN (106 aa)). Disordered stretches follow at residues 141–184 (ESDE…INAL), 201–264 (DDEN…SVRK), and 367–431 (LEDT…KENE). The span at 154–180 (SSSSSSTTTTTTTPTTPPTTTTTTSSS) shows a compositional bias: low complexity. Residues 210–264 (KNNGDTSSDKKGEKEKEKEKEKEKEKEKEKEKEKEKEKEKEKEKEKDSDTKSVRK) are compositionally biased toward basic and acidic residues. A coiled-coil region spans residues 217–260 (SDKKGEKEKEKEKEKEKEKEKEKEKEKEKEKEKEKEKEKDSDTK). Over residues 367–379 (LEDTEEESVDIES) the composition is skewed to acidic residues. The span at 380–396 (NDNSNSNGNSNSNNNLD) shows a compositional bias: low complexity. Residues 443-503 (SNTFGDFLMV…MKTIFTLPSY (61 aa)) enclose the DDT domain. Positions 530–565 (FQNEVKRIAIEEKEKQEKLKQLEEQNIRMLNLANEL) form a coiled coil. 2 disordered regions span residues 562-632 (ANEL…WKEE) and 707-744 (KQDD…QKKP). Residues 567–577 (GSDDEDDEMKL) are compositionally biased toward acidic residues. Residues 578–603 (DEDGNEIKKDVEMKDNDGTKDTKKDD) are compositionally biased toward basic and acidic residues. Coiled coils occupy residues 593 to 628 (NDGT…GEEE) and 674 to 782 (ASEK…RDRN). Acidic residues-rich tracts occupy residues 604-631 (EENE…EWKE) and 715-729 (AEDD…EEQQ).

The protein resides in the nucleus. This Dictyostelium discoideum (Social amoeba) protein is DDT domain-containing protein DDB_G0282237.